Consider the following 212-residue polypeptide: Thymidylate kinase (212 aa).

10–17 (GLEGAGKT) is an ATP binding site.

The protein belongs to the thymidylate kinase family.

The enzyme catalyses dTMP + ATP = dTDP + ADP. Phosphorylation of dTMP to form dTDP in both de novo and salvage pathways of dTTP synthesis. In Serratia proteamaculans (strain 568), this protein is Thymidylate kinase.